Here is a 162-residue protein sequence, read N- to C-terminus: NADH-quinone oxidoreductase subunit I (162 aa).

2 consecutive 4Fe-4S ferredoxin-type domains span residues 52 to 82 (LRRY…IEAG) and 93 to 122 (TRYD…EGPN). [4Fe-4S] cluster contacts are provided by Cys-62, Cys-65, Cys-68, Cys-72, Cys-102, Cys-105, Cys-108, and Cys-112.

Belongs to the complex I 23 kDa subunit family. As to quaternary structure, NDH-1 is composed of 14 different subunits. Subunits NuoA, H, J, K, L, M, N constitute the membrane sector of the complex. Requires [4Fe-4S] cluster as cofactor.

The protein resides in the cell inner membrane. The enzyme catalyses a quinone + NADH + 5 H(+)(in) = a quinol + NAD(+) + 4 H(+)(out). Its function is as follows. NDH-1 shuttles electrons from NADH, via FMN and iron-sulfur (Fe-S) centers, to quinones in the respiratory chain. The immediate electron acceptor for the enzyme in this species is believed to be ubiquinone. Couples the redox reaction to proton translocation (for every two electrons transferred, four hydrogen ions are translocated across the cytoplasmic membrane), and thus conserves the redox energy in a proton gradient. The sequence is that of NADH-quinone oxidoreductase subunit I from Methylorubrum populi (strain ATCC BAA-705 / NCIMB 13946 / BJ001) (Methylobacterium populi).